The sequence spans 1162 residues: Leptin receptor (1162 aa).

The signal sequence occupies residues 1-21 (MMCQKFYVVLLHWEFLYVIAA). Residues 22–839 (LNLAYPISPW…AIDKQQNDAG (818 aa)) are Extracellular-facing. 5 disulfide bridges follow: Cys-37–Cys-90, Cys-89–Cys-99, Cys-131–Cys-142, Cys-186–Cys-195, and Cys-188–Cys-193. N-linked (GlcNAc...) asparagine glycans are attached at residues Asn-41, Asn-56, Asn-73, and Asn-98. The N-linked (GlcNAc...) asparagine glycan is linked to Asn-187. The Fibronectin type-III 1 domain maps to 238 to 331 (PPLGLHMEVT…SPQVFTTQDV (94 aa)). 2 N-linked (GlcNAc...) asparagine glycosylation sites follow: Asn-275 and Asn-345. The region spanning 329–427 (QDVVYFPPKI…HRYAELYVID (99 aa)) is the Ig-like domain. 2 cysteine pairs are disulfide-bonded: Cys-350/Cys-410 and Cys-411/Cys-416. Asn-431 is a glycosylation site (N-linked (GlcNAc...) asparagine). 3 disulfide bridges follow: Cys-434/Cys-445, Cys-471/Cys-526, and Cys-486/Cys-496. The tract at residues 465–482 (HRRSLYCPDSPSIHPTSE) is leptin-binding. Residues Asn-514, Asn-622, Asn-657, Asn-668, Asn-686, Asn-695, Asn-698, and Asn-726 are each glycosylated (N-linked (GlcNAc...) asparagine). 3 Fibronectin type-III domains span residues 537–632 (PPSN…TLVM), 637–729 (PMRG…NLTF), and 738–832 (AVES…DAID). The WSXWS motif motif lies at 620–624 (WSNWS). A helical membrane pass occupies residues 840–860 (LYVIVPIIISSCVLLLGTLLI). Over 861–1162 (SHQRMKKLFW…MENKMCDLTV (302 aa)) the chain is Cytoplasmic. The Box 1 motif signature appears at 869 to 877 (FWDDVPNPK). Residue Ser-880 is modified to Phosphoserine. The tract at residues 891–896 (ETFEHL) is required for JAK2 activation. Positions 896–904 (LFTKHAESV) are required for STAT3 phosphorylation. Tyr-985 carries the phosphotyrosine; by JAK2 modification. Position 1077 is a phosphotyrosine (Tyr-1077). Tyr-1138 is modified (phosphotyrosine; by JAK2).

It belongs to the type I cytokine receptor family. Type 2 subfamily. Present as a mixture of monomers and dimers. The phosphorylated receptor binds a number of SH2 domain-containing proteins such as JAK2, STAT3, PTPN11, and SOCS3. Interaction with SOCS3 inhibits JAK/STAT signaling and MAPK cascade. Post-translationally, on ligand binding, phosphorylated on two conserved C-terminal tyrosine residues (isoform B only) by JAK2. Tyr-985 is required for complete binding and activation of PTPN11, ERK/FOS activation,for interaction with SOCS3 and SOCS3 mediated inhibition of leptin signaling. Phosphorylation on Tyr-1138 is required for STAT3 binding/activation. Phosphorylation of Tyr-1077 has a more accessory role. As to expression, isoform A: highest level of expression in lung and kidney, also present in heart, brain, spleen, liver, muscle, choroid plexus and hypothalamus. Isoform B: highest levels of expression in hypothalamus and lower levels in brain, testes and adipose tissue. Expressed by neurons of the parabrachial nucleus. Expressed by peripheral blood mononuclear cells and CD4(+) T-cells. Isoform E: expressed in adipose tissue, liver, hypothalamus, cerebral microvessels, heart, and testes.

The protein localises to the cell membrane. It localises to the basolateral cell membrane. It is found in the secreted. Its function is as follows. Receptor for hormone LEP/leptin. On ligand binding, mediates LEP central and peripheral effects through the activation of different signaling pathways such as JAK2/STAT3 and MAPK cascade/FOS. In the hypothalamus, LEP acts as an appetite-regulating factor that induces a decrease in food intake and an increase in energy consumption by inducing anorexinogenic factors and suppressing orexigenic neuropeptides, also regulates bone mass and secretion of hypothalamo-pituitary-adrenal hormones. In the periphery, increases basal metabolism, influences reproductive function, regulates pancreatic beta-cell function and insulin secretion, is pro-angiogenic and affects innate and adaptive immunity. Control of energy homeostasis and melanocortin production (stimulation of POMC and full repression of AgRP transcription) is mediated by STAT3 signaling, whereas distinct signals regulate NPY and the control of fertility, growth and glucose homeostasis. Involved in the regulation of counter-regulatory response to hypoglycemia by inhibiting neurons of the parabrachial nucleus. Has a specific effect on T lymphocyte responses, differentially regulating the proliferation of naive and memory T-cells. Leptin increases Th1 and suppresses Th2 cytokine production. May transport LEP across the blood-brain barrier. Binds LEP and mediates LEP endocytosis. Does not induce phosphorylation of and activate STAT3. Functionally, antagonizes Isoform A and isoform B-mediated LEP binding and endocytosis. This is Leptin receptor (Lepr) from Mus musculus (Mouse).